We begin with the raw amino-acid sequence, 137 residues long: ATP synthase epsilon chain, chloroplastic (137 aa).

Belongs to the ATPase epsilon chain family. F-type ATPases have 2 components, CF(1) - the catalytic core - and CF(0) - the membrane proton channel. CF(1) has five subunits: alpha(3), beta(3), gamma(1), delta(1), epsilon(1). CF(0) has three main subunits: a, b and c.

It is found in the plastid. The protein resides in the chloroplast thylakoid membrane. Produces ATP from ADP in the presence of a proton gradient across the membrane. This chain is ATP synthase epsilon chain, chloroplastic, found in Hordeum vulgare (Barley).